A 428-amino-acid polypeptide reads, in one-letter code: Patatin-like protein 3 (428 aa).

The 215-residue stretch at 38 to 252 folds into the PNPLA domain; that stretch reads LSIDGGGIRG…AANNPTLCAI (215 aa). The GXGXXG motif lies at 42-47; sequence GGGIRG. A GXSXG motif is present at residues 80 to 84; sequence GTSTG. The active-site Nucleophile is the Ser-82. Asp-239 serves as the catalytic Proton acceptor. A DGA/G motif is present at residues 239–241; sequence DGG. At Ser-423 the chain carries Phosphoserine.

Belongs to the patatin family. Expressed specifically in the stigma, ovary and funiculus of the ovary.

The protein localises to the cytoplasm. Its function is as follows. Possesses non-specific lipolytic acyl hydrolase (LAH) activity. Catalyzes the hydrolysis of the neutral lipids monogalactosyldiacylglycerol (MGDG), digalactosyldiacylglycerol (DGDG) and phosphatidylglycerol (PG), and less efficiently the polar lipids phosphatidylcholine (PC) and phosphatidylinositol (PI), but not the storage lipid triacylglycerol (TAG). May play a role in root development. This Arabidopsis thaliana (Mouse-ear cress) protein is Patatin-like protein 3 (PLP3).